The chain runs to 853 residues: DNA topoisomerase 1 (853 aa).

In terms of domain architecture, Toprim spans 3 to 136 (KSLVIVESPV…KFRRVVFNEI (134 aa)). Positions 9 and 105 each coordinate Mg(2+). A Topo IA-type catalytic domain is found at 152–565 (NMNRVYSQQA…SFFDNFSQQL (414 aa)). Positions 186–191 (SAGRVQ) are interaction with DNA. Residue Y313 is the O-(5'-phospho-DNA)-tyrosine intermediate of the active site. 3 consecutive C4-type zinc fingers follow at residues 589–621 (CSLCNKKMGIKTAVTGVFLSCLGYNSEPNEKRC), 649–676 (CKKCNLVMDVYLINENLKIFICINNPSC), and 699–724 (CEKCKNDMLFKTGRFGNFFMCINDTC).

Belongs to the type IA topoisomerase family. Monomer. Requires Mg(2+) as cofactor.

The enzyme catalyses ATP-independent breakage of single-stranded DNA, followed by passage and rejoining.. Functionally, releases the supercoiling and torsional tension of DNA, which is introduced during the DNA replication and transcription, by transiently cleaving and rejoining one strand of the DNA duplex. Introduces a single-strand break via transesterification at a target site in duplex DNA. The scissile phosphodiester is attacked by the catalytic tyrosine of the enzyme, resulting in the formation of a DNA-(5'-phosphotyrosyl)-enzyme intermediate and the expulsion of a 3'-OH DNA strand. The free DNA strand then undergoes passage around the unbroken strand, thus removing DNA supercoils. Finally, in the religation step, the DNA 3'-OH attacks the covalent intermediate to expel the active-site tyrosine and restore the DNA phosphodiester backbone. The chain is DNA topoisomerase 1 from Buchnera aphidicola subsp. Schizaphis graminum (strain Sg).